The following is a 567-amino-acid chain: Geraniol synthase, chloroplastic (567 aa).

A chloroplast-targeting transit peptide spans 1–63 (MSCARITVTL…GDNSQRKNTR (63 aa)). The interval 48–75 (STPLINGDNSQRKNTRQHMEESSSKRRE) is disordered. Basic and acidic residues predominate over residues 64–75 (QHMEESSSKRRE). Arg286, Asp323, Asp327, Arg466, and Asp469 together coordinate (2E)-geranyl diphosphate. Mn(2+)-binding residues include Asp323 and Asp327. The short motif at 323-327 (DDIFD) is the DDXXD motif element. Mn(2+) contacts are provided by Asp469, Thr473, and Glu477.

This sequence belongs to the terpene synthase family. Tpsb subfamily. In terms of assembly, homodimer. Requires Mn(2+) as cofactor. As to expression, expressed in the peltate glandular trichomes of the leaves.

Its subcellular location is the plastid. The protein localises to the chloroplast. It carries out the reaction (2E)-geranyl diphosphate + H2O = (2E)-geraniol + diphosphate. Its pathway is secondary metabolite biosynthesis; terpenoid biosynthesis. Monoterpene synthase that catalyzes the formation of geraniol from geranyl diphosphate. This chain is Geraniol synthase, chloroplastic (GES), found in Ocimum basilicum (Sweet basil).